The primary structure comprises 217 residues: Probable cutinase 3 (217 aa).

Residues 1-17 (MSLRSLFVAGLATLALA) form the signal peptide. Disulfide bonds link Cys39–Cys118 and Cys65–Cys79. The Nucleophile role is filled by Ser129. Cys180 and Cys187 are joined by a disulfide. Asp184 is an active-site residue. The Proton donor/acceptor role is filled by His197.

The protein belongs to the cutinase family.

The protein localises to the secreted. It catalyses the reaction cutin + H2O = cutin monomers.. In terms of biological role, catalyzes the hydrolysis of complex carboxylic polyesters found in the cell wall of plants. Degrades cutin, a macromolecule that forms the structure of the plant cuticle. The polypeptide is Probable cutinase 3 (Neosartorya fischeri (strain ATCC 1020 / DSM 3700 / CBS 544.65 / FGSC A1164 / JCM 1740 / NRRL 181 / WB 181) (Aspergillus fischerianus)).